Here is a 1074-residue protein sequence, read N- to C-terminus: Isoleucine--tRNA ligase (1074 aa).

The short motif at 50–60 is the 'HIGH' region element; sequence PYTSGAAHMGT. The short motif at 605-609 is the 'KMSKS' region element; that stretch reads GMSKS. Lys608 is an ATP binding site.

The protein belongs to the class-I aminoacyl-tRNA synthetase family. IleS type 2 subfamily. Monomer. Zn(2+) serves as cofactor.

The protein resides in the cytoplasm. The catalysed reaction is tRNA(Ile) + L-isoleucine + ATP = L-isoleucyl-tRNA(Ile) + AMP + diphosphate. Catalyzes the attachment of isoleucine to tRNA(Ile). As IleRS can inadvertently accommodate and process structurally similar amino acids such as valine, to avoid such errors it has two additional distinct tRNA(Ile)-dependent editing activities. One activity is designated as 'pretransfer' editing and involves the hydrolysis of activated Val-AMP. The other activity is designated 'posttransfer' editing and involves deacylation of mischarged Val-tRNA(Ile). The polypeptide is Isoleucine--tRNA ligase (Haloarcula marismortui (strain ATCC 43049 / DSM 3752 / JCM 8966 / VKM B-1809) (Halobacterium marismortui)).